Reading from the N-terminus, the 356-residue chain is Probable dual-specificity RNA methyltransferase RlmN (356 aa).

The Proton acceptor role is filled by E100. The 235-residue stretch at 106-340 (TNSRLTTCVS…VSLRASRGLD (235 aa)) folds into the Radical SAM core domain. C113 and C345 are oxidised to a cystine. The [4Fe-4S] cluster site is built by C120, C124, and C127. Residues 167–168 (GE), S197, 226–228 (SLH), and N302 each bind S-adenosyl-L-methionine. C345 serves as the catalytic S-methylcysteine intermediate.

Belongs to the radical SAM superfamily. RlmN family. The cofactor is [4Fe-4S] cluster.

Its subcellular location is the cytoplasm. The catalysed reaction is adenosine(2503) in 23S rRNA + 2 reduced [2Fe-2S]-[ferredoxin] + 2 S-adenosyl-L-methionine = 2-methyladenosine(2503) in 23S rRNA + 5'-deoxyadenosine + L-methionine + 2 oxidized [2Fe-2S]-[ferredoxin] + S-adenosyl-L-homocysteine. The enzyme catalyses adenosine(37) in tRNA + 2 reduced [2Fe-2S]-[ferredoxin] + 2 S-adenosyl-L-methionine = 2-methyladenosine(37) in tRNA + 5'-deoxyadenosine + L-methionine + 2 oxidized [2Fe-2S]-[ferredoxin] + S-adenosyl-L-homocysteine. In terms of biological role, specifically methylates position 2 of adenine 2503 in 23S rRNA and position 2 of adenine 37 in tRNAs. This is Probable dual-specificity RNA methyltransferase RlmN from Prochlorococcus marinus (strain MIT 9211).